Here is a 37-residue protein sequence, read N- to C-terminus: Large ribosomal subunit protein bL36 (37 aa).

Belongs to the bacterial ribosomal protein bL36 family.

In Desulfotalea psychrophila (strain LSv54 / DSM 12343), this protein is Large ribosomal subunit protein bL36.